A 113-amino-acid polypeptide reads, in one-letter code: Probable mesentericin-Y105 immunity protein (113 aa).

The protein belongs to the immunity protein EntA family.

Imparts immunity to mesentericin-Y105 to naturally sensitive host strains. The protein is Probable mesentericin-Y105 immunity protein (mesI) of Leuconostoc mesenteroides.